We begin with the raw amino-acid sequence, 315 residues long: Calumenin-B (315 aa).

A signal peptide spans 1–19; it reads MEQWPLLFVVALCILQSSS. Residues 22–39 show a composition bias toward basic and acidic residues; the sequence is MEKKDRVHHDAPLSNKDH. The tract at residues 22–42 is disordered; it reads MEKKDRVHHDAPLSNKDHDDE. EF-hand domains lie at 68–103, 104–139, 151–186, 188–223, 229–264, and 265–300; these read ESKERLGKIVEKIDEDHDGFVTADEMKRWIKHAQRR, WIYEDVDRQWQAHDLNSDSFVSWEEYKDATYGYILD, QMMTRDERRFKMADQDGDLRANKEEFTAFLHPEEFD, MKDIVVLETMEDIDKNGDGLIDLNEYIGDMYSQNGD, WVKTEREQFTEFRDKNKDGRMDKDETRDWILPADYD, and HAEAEAKHLLYESDADKDGRLTKQEIVDKYDLFVGS. D81, D83, D85, E92, D117, N119, D121, E128, D164, D166, D168, R170, E175, D201, N203, D205, E212, D242, N244, D246, R248, E253, D278, D280, D282, R284, and E289 together coordinate Ca(2+). Positions 312–315 match the Prevents secretion from ER motif; sequence HDEF.

The protein belongs to the CREC family. Interacts with ggcx.

It localises to the endoplasmic reticulum membrane. It is found in the golgi apparatus. The protein localises to the secreted. The protein resides in the melanosome. Its subcellular location is the sarcoplasmic reticulum lumen. In terms of biological role, involved in regulation of vitamin K-dependent carboxylation of multiple N-terminal glutamate residues. Seems to inhibit gamma-carboxylase ggcx. Binds 7 calcium ions with a low affinity. The sequence is that of Calumenin-B (calub) from Danio rerio (Zebrafish).